The chain runs to 232 residues: 2-C-methyl-D-erythritol 4-phosphate cytidylyltransferase (232 aa).

This sequence belongs to the IspD/TarI cytidylyltransferase family. IspD subfamily.

It catalyses the reaction 2-C-methyl-D-erythritol 4-phosphate + CTP + H(+) = 4-CDP-2-C-methyl-D-erythritol + diphosphate. The protein operates within isoprenoid biosynthesis; isopentenyl diphosphate biosynthesis via DXP pathway; isopentenyl diphosphate from 1-deoxy-D-xylulose 5-phosphate: step 2/6. In terms of biological role, catalyzes the formation of 4-diphosphocytidyl-2-C-methyl-D-erythritol from CTP and 2-C-methyl-D-erythritol 4-phosphate (MEP). In Neorickettsia sennetsu (strain ATCC VR-367 / Miyayama) (Ehrlichia sennetsu), this protein is 2-C-methyl-D-erythritol 4-phosphate cytidylyltransferase.